Reading from the N-terminus, the 256-residue chain is Trans-aconitate 2-methyltransferase (256 aa).

Belongs to the methyltransferase superfamily. Tam family.

Its subcellular location is the cytoplasm. It carries out the reaction trans-aconitate + S-adenosyl-L-methionine = (E)-3-(methoxycarbonyl)pent-2-enedioate + S-adenosyl-L-homocysteine. In terms of biological role, catalyzes the S-adenosylmethionine monomethyl esterification of trans-aconitate. This Rhizobium leguminosarum bv. trifolii (strain WSM2304) protein is Trans-aconitate 2-methyltransferase.